Here is a 129-residue protein sequence, read N- to C-terminus: Allergen Bra j 1-E (129 aa).

Residues 28 to 47 (KQAMQSGSGPQPQGPQQRPP) form a disordered region. A compositionally biased stretch (low complexity) spans 32–47 (QSGSGPQPQGPQQRPP).

It belongs to the 2S seed storage albumins family. As to quaternary structure, the mature protein consists of a small and a large chain linked by two disulfide bonds.

In terms of biological role, this is a 2S seed storage protein. In Brassica juncea (Indian mustard), this protein is Allergen Bra j 1-E.